The primary structure comprises 511 residues: Cytochrome P450 714C3 (511 aa).

At 1 to 6 (MEKLLA) the chain is on the lumenal side. Residues 7–27 (LIVVLVILLSLALFYLCNILW) form a helical; Signal-anchor for type III membrane protein membrane-spanning segment. At 28–511 (LRAVKIRKKL…GLPLMVTKLP (484 aa)) the chain is on the cytoplasmic side. Cys458 serves as a coordination point for heme.

This sequence belongs to the cytochrome P450 family. Heme is required as a cofactor.

It is found in the membrane. The chain is Cytochrome P450 714C3 (CYP714C3) from Oryza sativa subsp. japonica (Rice).